Reading from the N-terminus, the 704-residue chain is Elongation factor G (704 aa).

The tr-type G domain maps to 10–290 (KKVRNIGIMA…AVVDYLPSPL (281 aa)). Residues 19–26 (AHIDAGKT), 83–87 (DTPGH), and 137–140 (NKMD) each bind GTP.

It belongs to the TRAFAC class translation factor GTPase superfamily. Classic translation factor GTPase family. EF-G/EF-2 subfamily.

The protein localises to the cytoplasm. In terms of biological role, catalyzes the GTP-dependent ribosomal translocation step during translation elongation. During this step, the ribosome changes from the pre-translocational (PRE) to the post-translocational (POST) state as the newly formed A-site-bound peptidyl-tRNA and P-site-bound deacylated tRNA move to the P and E sites, respectively. Catalyzes the coordinated movement of the two tRNA molecules, the mRNA and conformational changes in the ribosome. This is Elongation factor G from Kocuria rhizophila (strain ATCC 9341 / DSM 348 / NBRC 103217 / DC2201).